Here is a 243-residue protein sequence, read N- to C-terminus: Ornithine decarboxylase antizyme 3 (243 aa).

Ser6, Ser9, and Ser12 each carry phosphoserine.

This sequence belongs to the ODC antizyme family. As to quaternary structure, interacts with ODC1 and thereby sterically blocks ODC homodimerization. Interacts with AZIN2; this interaction disrupts the interaction between the antizyme and ODC1. Interacts with GGN. As to expression, testis specific. Expressed throughout the differentiation process from spermatids to spermatozoa in the inner part of the seminiferous tubules.

The protein resides in the nucleus. It is found in the cytoplasm. Its function is as follows. Ornithine decarboxylase (ODC) antizyme protein that negatively regulates ODC activity and intracellular polyamine biosynthesis and uptake in response to increased intracellular polyamine levels. Binds to ODC monomers, inhibiting the assembly of the functional ODC homodimers. Does not target the ODC monomers for degradation, which allows a protein synthesis-independent restoration of ODC activity. Stabilizes AZIN2 by interfering with its ubiquitination. Involved in the translocation of AZNI2 from ER-Golgi intermediate compartment (ERGIC) to the cytosol. Probably plays a key role in spermatogenesis by regulating the intracellular concentration of polyamines in haploid germ cells. The protein is Ornithine decarboxylase antizyme 3 (Oaz3) of Mus musculus (Mouse).